The following is a 227-amino-acid chain: ATP synthase F(0) complex subunit a (227 aa).

Helical transmembrane passes span 12–32, 69–89, 98–118, 132–152, 180–200, and 202–222; these read PTYLGIPLIAVALTLPWILFP, WAVLLTSLMLFLITLNMLGLL, QLSLNMGLAVPLWLATVIIGM, EGTPVPLIPVLIIIETISLFI, FVLMPIMPTVAILTSIVLFLL, and LLEIAVAMIQAYVFVLLLSLY.

It belongs to the ATPase A chain family. As to quaternary structure, component of the ATP synthase complex composed at least of ATP5F1A/subunit alpha, ATP5F1B/subunit beta, ATP5MC1/subunit c (homooctomer), MT-ATP6/subunit a, MT-ATP8/subunit 8, ATP5ME/subunit e, ATP5MF/subunit f, ATP5MG/subunit g, ATP5MK/subunit k, ATP5MJ/subunit j, ATP5F1C/subunit gamma, ATP5F1D/subunit delta, ATP5F1E/subunit epsilon, ATP5PF/subunit F6, ATP5PB/subunit b, ATP5PD/subunit d, ATP5PO/subunit OSCP. ATP synthase complex consists of a soluble F(1) head domain (subunits alpha(3) and beta(3)) - the catalytic core - and a membrane F(0) domain - the membrane proton channel (subunits c, a, 8, e, f, g, k and j). These two domains are linked by a central stalk (subunits gamma, delta, and epsilon) rotating inside the F1 region and a stationary peripheral stalk (subunits F6, b, d, and OSCP). Interacts with DNAJC30; interaction is direct.

The protein resides in the mitochondrion inner membrane. The enzyme catalyses H(+)(in) = H(+)(out). Subunit a, of the mitochondrial membrane ATP synthase complex (F(1)F(0) ATP synthase or Complex V) that produces ATP from ADP in the presence of a proton gradient across the membrane which is generated by electron transport complexes of the respiratory chain. ATP synthase complex consist of a soluble F(1) head domain - the catalytic core - and a membrane F(1) domain - the membrane proton channel. These two domains are linked by a central stalk rotating inside the F(1) region and a stationary peripheral stalk. During catalysis, ATP synthesis in the catalytic domain of F(1) is coupled via a rotary mechanism of the central stalk subunits to proton translocation. With the subunit c (ATP5MC1), forms the proton-conducting channel in the F(0) domain, that contains two crucial half-channels (inlet and outlet) that facilitate proton movement from the mitochondrial intermembrane space (IMS) into the matrix. Protons are taken up via the inlet half-channel and released through the outlet half-channel, following a Grotthuss mechanism. The sequence is that of ATP synthase F(0) complex subunit a from Salmo salar (Atlantic salmon).